Consider the following 215-residue polypeptide: MKGVYFVSGIDTDIGKTVATGMLAKQLLQQGKSVITQKPVQTGCQDIAEDIAVHRKIMGIPMQEADEQRLTMPEIFSHPASPHLAARLDGRGLDLDKIRTATQELAAQYEVVLVEGAGGLMVPLTEKLLTIDHIQQQAYPVILVTSGRLGSINHTLLSFVVLKQYGIRLHSLVFNHIHDSRDAHVAQDSLNYLQCRLKADFPEAEWMELAKTGAV.

13 to 18 contacts ATP; that stretch reads DIGKTV. Position 17 (Thr-17) interacts with Mg(2+). Lys-38 is a catalytic residue. Position 42 (Thr-42) interacts with substrate. Residues Asp-50, 115–118, and 175–176 each bind ATP; these read EGAG and NH. Mg(2+)-binding residues include Asp-50 and Glu-115.

Belongs to the dethiobiotin synthetase family. In terms of assembly, homodimer. Requires Mg(2+) as cofactor.

It is found in the cytoplasm. The catalysed reaction is (7R,8S)-7,8-diammoniononanoate + CO2 + ATP = (4R,5S)-dethiobiotin + ADP + phosphate + 3 H(+). The protein operates within cofactor biosynthesis; biotin biosynthesis; biotin from 7,8-diaminononanoate: step 1/2. In terms of biological role, catalyzes a mechanistically unusual reaction, the ATP-dependent insertion of CO2 between the N7 and N8 nitrogen atoms of 7,8-diaminopelargonic acid (DAPA, also called 7,8-diammoniononanoate) to form a ureido ring. The sequence is that of ATP-dependent dethiobiotin synthetase BioD from Neisseria gonorrhoeae (strain NCCP11945).